The chain runs to 409 residues: Lipoyl synthase, mitochondrial (409 aa).

The interval 21–41 (QQQVPPSEEPRNESGAANPPL) is disordered. Residues Cys125, Cys130, Cys136, Cys159, Cys163, Cys166, and Ser375 each coordinate [4Fe-4S] cluster. Residues 142 to 364 (EEGDGTATAT…EKEALDMGFL (223 aa)) form the Radical SAM core domain.

The protein belongs to the radical SAM superfamily. Lipoyl synthase family. It depends on [4Fe-4S] cluster as a cofactor.

It localises to the mitochondrion. The catalysed reaction is [[Fe-S] cluster scaffold protein carrying a second [4Fe-4S](2+) cluster] + N(6)-octanoyl-L-lysyl-[protein] + 2 oxidized [2Fe-2S]-[ferredoxin] + 2 S-adenosyl-L-methionine + 4 H(+) = [[Fe-S] cluster scaffold protein] + N(6)-[(R)-dihydrolipoyl]-L-lysyl-[protein] + 4 Fe(3+) + 2 hydrogen sulfide + 2 5'-deoxyadenosine + 2 L-methionine + 2 reduced [2Fe-2S]-[ferredoxin]. Its pathway is protein modification; protein lipoylation via endogenous pathway; protein N(6)-(lipoyl)lysine from octanoyl-[acyl-carrier-protein]: step 2/2. Catalyzes the radical-mediated insertion of two sulfur atoms into the C-6 and C-8 positions of the octanoyl moiety bound to the lipoyl domains of lipoate-dependent enzymes, thereby converting the octanoylated domains into lipoylated derivatives. This chain is Lipoyl synthase, mitochondrial, found in Trypanosoma brucei gambiense (strain MHOM/CI/86/DAL972).